The following is a 344-amino-acid chain: Methionine import ATP-binding protein MetN (344 aa).

The region spanning 7-245 (ISLKKISRCF…PQDDTTIAML (239 aa)) is the ABC transporter domain. 42-49 (GRSGAGKS) is a binding site for ATP.

It belongs to the ABC transporter superfamily. Methionine importer (TC 3.A.1.24) family. The complex is composed of two ATP-binding proteins (MetN), two transmembrane proteins (MetI) and a solute-binding protein (MetQ).

It is found in the cell inner membrane. It catalyses the reaction L-methionine(out) + ATP + H2O = L-methionine(in) + ADP + phosphate + H(+). The enzyme catalyses D-methionine(out) + ATP + H2O = D-methionine(in) + ADP + phosphate + H(+). Part of the ABC transporter complex MetNIQ involved in methionine import. Responsible for energy coupling to the transport system. The polypeptide is Methionine import ATP-binding protein MetN (Bartonella henselae (strain ATCC 49882 / DSM 28221 / CCUG 30454 / Houston 1) (Rochalimaea henselae)).